A 732-amino-acid polypeptide reads, in one-letter code: Elongation factor 2 (732 aa).

Positions 19–230 constitute a tr-type G domain; that stretch reads ERIRNMGIAA…VSFKDIVELT (212 aa). Residues 28–35, 94–98, and 148–151 each bind GTP; these read AHIDHGKT, DTPGH, and NKVD. His597 carries the diphthamide modification.

It belongs to the TRAFAC class translation factor GTPase superfamily. Classic translation factor GTPase family. EF-G/EF-2 subfamily.

It localises to the cytoplasm. Its function is as follows. Catalyzes the GTP-dependent ribosomal translocation step during translation elongation. During this step, the ribosome changes from the pre-translocational (PRE) to the post-translocational (POST) state as the newly formed A-site-bound peptidyl-tRNA and P-site-bound deacylated tRNA move to the P and E sites, respectively. Catalyzes the coordinated movement of the two tRNA molecules, the mRNA and conformational changes in the ribosome. This chain is Elongation factor 2, found in Thermococcus gammatolerans (strain DSM 15229 / JCM 11827 / EJ3).